Here is a 325-residue protein sequence, read N- to C-terminus: ADP-ribose glycohydrolase MACROD1 (325 aa).

Positions 21–55 (LGAPRPWPGPSPGATRTRSSACGPPASLSAHHPRA) are disordered. 3 positions are modified to N6-succinyllysine: Lys-96, Lys-103, and Lys-129. Lys-138 is covalently cross-linked (Glycyl lysine isopeptide (Lys-Gly) (interchain with G-Cter in SUMO2)). Residues 141 to 322 (EPKYKKDKQL…IYRERLPHYF (182 aa)) enclose the Macro domain. A substrate-binding site is contributed by 159 to 161 (GDI). Lys-163 is subject to N6-acetyllysine. Residues 172–174 (AAN), 179–184 (GGGGVD), 267–273 (ISTGVFG), and Phe-306 each bind substrate.

It belongs to the MacroD-type family. MacroD1/2-like subfamily. Interacts with ESR1; Interacts in a manner that is estrogen independent but is enhanced by estrogen. Interacts (via macro domain) with AR.

It localises to the nucleus. It carries out the reaction 3''-O-acetyl-ADP-D-ribose + H2O = ADP-D-ribose + acetate + H(+). The enzyme catalyses 2''-O-acetyl-ADP-D-ribose + H2O = ADP-D-ribose + acetate + H(+). It catalyses the reaction 4-O-(ADP-D-ribosyl)-L-aspartyl-[protein] + H2O = L-aspartyl-[protein] + ADP-D-ribose + H(+). The catalysed reaction is 5-O-(ADP-D-ribosyl)-L-glutamyl-[protein] + H2O = L-glutamyl-[protein] + ADP-D-ribose + H(+). It carries out the reaction alpha-NAD(+) + H2O = ADP-D-ribose + nicotinamide + H(+). Subject to competitive inhibition by the product ADP-ribose. Removes ADP-ribose from aspartate and glutamate residues in proteins bearing a single ADP-ribose moiety. Inactive towards proteins bearing poly-ADP-ribose. Deacetylates O-acetyl-ADP ribose, a signaling molecule generated by the deacetylation of acetylated lysine residues in histones and other proteins. Plays a role in estrogen signaling. Binds to androgen receptor (AR) and amplifies the transactivation function of AR in response to androgen. May play an important role in carcinogenesis and/or progression of hormone-dependent cancers by feed-forward mechanism that activates ESR1 transactivation. Could be an ESR1 coactivator, providing a positive feedback regulatory loop for ESR1 signal transduction. Could be involved in invasive growth by down-regulating CDH1 in endometrial cancer cells. Enhances ESR1-mediated transcription activity. This is ADP-ribose glycohydrolase MACROD1 (MACROD1) from Bos taurus (Bovine).